A 222-amino-acid chain; its full sequence is Tetratricopeptide repeat protein 9A (222 aa).

Disordered stretches follow at residues 1–49 (MERK…AAAE) and 88–116 (KGLL…GRLS). A TPR 1 repeat occupies 56–89 (RAHEFKSQGAQCYKDKKFREAIGKYHRALLELKG). Ser105 is modified (phosphoserine). TPR repeat units lie at residues 125–160 (AIEI…LKKE) and 161–194 (GENF…RTQQ).

Belongs to the TTC9 family.

The protein is Tetratricopeptide repeat protein 9A (TTC9) of Homo sapiens (Human).